Consider the following 207-residue polypeptide: Casparian strip membrane protein 1 (207 aa).

Over residues 1–12 (MEGESTAVNITE) the composition is skewed to polar residues. The tract at residues 1 to 24 (MEGESTAVNITETPKERKGKAPLL) is disordered. Residues 1–48 (MEGESTAVNITETPKERKGKAPLLAPPPASGGIKTIVQKAPKGGYKRG) are Cytoplasmic-facing. A helical membrane pass occupies residues 49–69 (LAVFDVVLRIAGIAAALGAVI). The Extracellular portion of the chain corresponds to 70-98 (AMGSTDQTLPFFTQFFQFKAEFDDLPVFT). Residues 99-119 (FFVIANAITAAYLALSIPISI) traverse the membrane as a helical segment. Over 120-138 (VCIIRPHLVGPRVLLTFLD) the chain is Cytoplasmic. Residues 139–159 (TVMVGLTTAAAGGAASIVYLA) traverse the membrane as a helical segment. Residues 160-184 (HNGNSDANWPAICQQFNDFCQEVSG) lie on the Extracellular side of the membrane. Residues 185 to 205 (AVVASFITVVVLMFLIVLSAF) form a helical membrane-spanning segment. The Cytoplasmic portion of the chain corresponds to 206–207 (SL).

This sequence belongs to the Casparian strip membrane proteins (CASP) family. Homodimer and heterodimers.

Its subcellular location is the cell membrane. Its function is as follows. Regulates membrane-cell wall junctions and localized cell wall deposition. Required for establishment of the Casparian strip membrane domain (CSD) and the subsequent formation of Casparian strips, a cell wall modification of the root endodermis that determines an apoplastic barrier between the intraorganismal apoplasm and the extraorganismal apoplasm and prevents lateral diffusion. The chain is Casparian strip membrane protein 1 from Taraxacum kok-saghyz (Russian dandelion).